The sequence spans 83 residues: Kappa-theraphotoxin-Cg2b (83 aa).

An N-terminal signal peptide occupies residues 1–21 (MKGSAFAIILGLVVLCACSFA). Residues 22–53 (EDEQDQFASPNELLRSMFLESRHELIPEVEGR) constitute a propeptide that is removed on maturation. Cystine bridges form between Cys-55–Cys-69, Cys-62–Cys-74, and Cys-68–Cys-78.

Belongs to the neurotoxin 30 (phrixotoxin) family. In terms of tissue distribution, expressed by the venom gland.

The protein resides in the secreted. Functionally, probable ion channel inhibitor. The sequence is that of Kappa-theraphotoxin-Cg2b from Chilobrachys guangxiensis (Chinese earth tiger tarantula).